Consider the following 374-residue polypeptide: Tryptophan--tRNA ligase (374 aa).

The short motif at 81 to 89 (PSGPVHIGH) is the 'HIGH' region element. Residues 258–262 (KMSAS) carry the 'KMSKS' region motif.

Belongs to the class-I aminoacyl-tRNA synthetase family.

The protein localises to the cytoplasm. It catalyses the reaction tRNA(Trp) + L-tryptophan + ATP = L-tryptophyl-tRNA(Trp) + AMP + diphosphate + H(+). The polypeptide is Tryptophan--tRNA ligase (Pyrobaculum calidifontis (strain DSM 21063 / JCM 11548 / VA1)).